A 311-amino-acid chain; its full sequence is MLNNILKIATRQSPLAIWQANYVRNQLLSFYPTLLIELVPIVTSGDLILDKPLMKAGGKRLFIKELEQAMLERRADIAVHSMKDITISFPEGIGLAVLCAREDPRDAFISTHYASIDLLPTGAVVGTSSMRRQCQLRERRPDLVMRDLRGNIGTRLEKLDKGEYDALILAAAGLKRLDLAHRIRMIIDPTELLPAVGQGVIGIEYRLEDTHILSILAPLHHSATALRVSAERAMNAKLAGGCQVPIGSYAEIEGDQIWLRALVGSPDGSLIIRSEGRAPLSQAEILGQSIANDLLYRGAESILCRAFQVDS.

Position 242 is an S-(dipyrrolylmethanemethyl)cysteine (C242).

The protein belongs to the HMBS family. Monomer. The cofactor is dipyrromethane.

It carries out the reaction 4 porphobilinogen + H2O = hydroxymethylbilane + 4 NH4(+). It participates in porphyrin-containing compound metabolism; protoporphyrin-IX biosynthesis; coproporphyrinogen-III from 5-aminolevulinate: step 2/4. Its function is as follows. Tetrapolymerization of the monopyrrole PBG into the hydroxymethylbilane pre-uroporphyrinogen in several discrete steps. This chain is Porphobilinogen deaminase, found in Baumannia cicadellinicola subsp. Homalodisca coagulata.